The chain runs to 336 residues: Retinol dehydrogenase 10-B (336 aa).

The chain crosses the membrane as a helical; Signal-anchor span at residues 7–27 (LFVVTFKIIWSFVLAGAKWFI). Residue 40–64 (VITGAGSGLGRLFALEFARRRATLV) coordinates NADP(+). A substrate-binding site is contributed by serine 192. Tyrosine 205 serves as the catalytic Proton acceptor.

It belongs to the short-chain dehydrogenases/reductases (SDR) family.

The protein localises to the microsome membrane. The protein resides in the endoplasmic reticulum membrane. The catalysed reaction is all-trans-retinol + NADP(+) = all-trans-retinal + NADPH + H(+). It participates in cofactor metabolism; retinol metabolism. In terms of biological role, retinol dehydrogenase with a clear preference for NADP. Converts all-trans-retinol to all-trans-retinal. Has no detectable activity towards 11-cis-retinol, 9-cis-retinol and 13-cis-retinol. The polypeptide is Retinol dehydrogenase 10-B (rdh10b) (Danio rerio (Zebrafish)).